Here is a 391-residue protein sequence, read N- to C-terminus: 3-ketoacyl-CoA thiolase (391 aa).

The active-site Acyl-thioester intermediate is the cysteine 95. Catalysis depends on proton acceptor residues histidine 347 and cysteine 377.

The protein belongs to the thiolase-like superfamily. Thiolase family. In terms of assembly, heterotetramer of two alpha chains (FadB) and two beta chains (FadA).

It localises to the cytoplasm. It catalyses the reaction an acyl-CoA + acetyl-CoA = a 3-oxoacyl-CoA + CoA. Its pathway is lipid metabolism; fatty acid beta-oxidation. Catalyzes the final step of fatty acid oxidation in which acetyl-CoA is released and the CoA ester of a fatty acid two carbons shorter is formed. The chain is 3-ketoacyl-CoA thiolase from Ectopseudomonas oleovorans (Pseudomonas oleovorans).